The chain runs to 154 residues: Ribosomal RNA large subunit methyltransferase H (154 aa).

The S-adenosyl-L-methionine site is built by leucine 70 and glycine 102.

The protein belongs to the RNA methyltransferase RlmH family. In terms of assembly, homodimer.

It is found in the cytoplasm. It carries out the reaction pseudouridine(1915) in 23S rRNA + S-adenosyl-L-methionine = N(3)-methylpseudouridine(1915) in 23S rRNA + S-adenosyl-L-homocysteine + H(+). In terms of biological role, specifically methylates the pseudouridine at position 1915 (m3Psi1915) in 23S rRNA. In Hyphomonas neptunium (strain ATCC 15444), this protein is Ribosomal RNA large subunit methyltransferase H.